Reading from the N-terminus, the 502-residue chain is UPF0371 protein CLB_0371 (502 aa).

This sequence belongs to the UPF0371 family.

The sequence is that of UPF0371 protein CLB_0371 from Clostridium botulinum (strain ATCC 19397 / Type A).